Reading from the N-terminus, the 309-residue chain is uncharacterized protein (309 aa).

Pro residues-rich tracts occupy residues 1–17 and 24–51; these read MTSR…PSPP and SPVP…PTPR. Disordered regions lie at residues 1–174 and 216–240; these read MTSR…PPGV and PPDL…PLHA. Residues 67–83 show a composition bias toward low complexity; the sequence is LRSSPSSALNASRGAPS. Residues 84–112 are compositionally biased toward pro residues; the sequence is TSPPPSSSPPSSPASTPPSRTPSPTPTAP. 2 stretches are compositionally biased toward low complexity: residues 113–125 and 135–144; these read ASPV…TPAS and APSSSAALSS. Residues 160 to 174 are compositionally biased toward pro residues; the sequence is PPPPLPPPLQPPPGV. The helical transmembrane segment at 278 to 298 threads the bilayer; the sequence is LFLLFTLLSIHFSPFPIFILL.

Its subcellular location is the host membrane. This is an uncharacterized protein from Vitis vinifera (Grape).